Consider the following 473-residue polypeptide: ATP-dependent 6-phosphofructokinase 1 (473 aa).

A Phosphoserine modification is found at Ser-71. Residues Gly-102, 165-166, and 190-193 each bind ATP; these read RG and GDGS. A Mg(2+)-binding site is contributed by Asp-191. Substrate contacts are provided by residues 219–221, 264–266, Glu-320, and 376–379; these read TID, MGR, and YMIR. Asp-221 serves as the catalytic Proton acceptor.

The protein belongs to the phosphofructokinase type A (PFKA) family. PPi-dependent PFK group II subfamily. Atypical ATP-dependent clade 'X' sub-subfamily. As to quaternary structure, homotetramer. Mg(2+) is required as a cofactor. In terms of tissue distribution, expressed in roots, leaves, stems and flowers.

It is found in the cytoplasm. The catalysed reaction is beta-D-fructose 6-phosphate + ATP = beta-D-fructose 1,6-bisphosphate + ADP + H(+). It functions in the pathway carbohydrate degradation; glycolysis; D-glyceraldehyde 3-phosphate and glycerone phosphate from D-glucose: step 3/4. Its activity is regulated as follows. Allosterically activated by AMP. In terms of biological role, catalyzes the phosphorylation of D-fructose 6-phosphate to fructose 1,6-bisphosphate by ATP, the first committing step of glycolysis. The protein is ATP-dependent 6-phosphofructokinase 1 of Arabidopsis thaliana (Mouse-ear cress).